The chain runs to 270 residues: Neurotrophic factor BDNF precursor form (270 aa).

The N-terminal stretch at 1-18 is a signal peptide; it reads MTILFVTMVISYFSCMRA. The propeptide occupies 19–151; sequence APMREIPGVQ…AANMSMRVRR (133 aa). N-linked (GlcNAc...) asparagine glycosylation occurs at asparagine 144. Intrachain disulfides connect cysteine 164–cysteine 231, cysteine 209–cysteine 260, and cysteine 219–cysteine 262.

Belongs to the NGF-beta family.

The protein localises to the secreted. In terms of biological role, promotes the survival of neuronal populations that are all located either in the central nervous system or directly connected to it. The protein is Neurotrophic factor BDNF precursor form (bdnf) of Cyprinus carpio (Common carp).